The chain runs to 907 residues: Phototropin-2 (907 aa).

Residues 28–84 (ATAGLEIVAEDAPSGSSGAHQQQAWRPVAPATAGRDSGGTGSGKSSVDGGVGRASHD) are disordered. A compositionally biased stretch (polar residues) spans 41-51 (SGSSGAHQQQA). Positions 89-162 (VSQELKDALS…AKIRDAVKHG (74 aa)) constitute a PAS 1 domain. FMN contacts are provided by residues 138–143 (NCRFLQ), Arg156, Asn171, Asn181, and Gln202. Cys139 bears the S-4a-FMN cysteine mark. The 55-residue stretch at 163-217 (RSFCGRLLNYRKDGAPFWNLLTVTPIRDDNGKVIKFIGMQVEVSKYTEGLSDKRM) folds into the PAC 1 domain. The tract at residues 332–363 (RSSVGSREAPAVVEEPAPAPPPAPEVVERTDS) is disordered. In terms of domain architecture, PAS 2 spans 375 to 448 (QGIDLATTLE…DKIREAIREQ (74 aa)). Residues 424-429 (NCRFLQ), Arg442, Asn457, Asn467, and Gln488 each bind FMN. Position 425 is an S-4a-FMN cysteine (Cys425). Positions 449–503 (KEITVQLINYTKSGKKFWNLFHLQPMRDQKGELQYFIGVQLDGSDHVEPLRNRLS) constitute a PAC 2 domain. A Protein kinase domain is found at 576-863 (FKPVKPLGCG…ANDIKQHSFF (288 aa)). Residues 582 to 590 (LGCGDTGSV) and Lys605 each bind ATP. The active-site Proton acceptor is Asp701.

Belongs to the protein kinase superfamily. Ser/Thr protein kinase family. As to quaternary structure, homodimer. FMN serves as cofactor. In terms of processing, autophosphorylated in response to blue light irradiation. 2 molecules of FMN bind covalently to cysteines after exposure to blue light and are reversed in the dark. As to expression, expressed at low levels in leaves of dark-grown seedlings.

The enzyme catalyses L-seryl-[protein] + ATP = O-phospho-L-seryl-[protein] + ADP + H(+). It catalyses the reaction L-threonyl-[protein] + ATP = O-phospho-L-threonyl-[protein] + ADP + H(+). Functionally, protein kinase that acts as a blue light photoreceptor in a signal-transduction pathway for phototropic responses. Regulates a wide range of physiological activities in plants that maximize the efficiency of photosynthesis, such as chloroplast relocations, stomata opening, and leaf expansion. The chain is Phototropin-2 (PHOT2) from Oryza sativa subsp. japonica (Rice).